A 316-amino-acid polypeptide reads, in one-letter code: 4-hydroxy-3-methylbut-2-enyl diphosphate reductase (316 aa).

C18 provides a ligand contact to [4Fe-4S] cluster. (2E)-4-hydroxy-3-methylbut-2-enyl diphosphate is bound by residues H47 and H80. 2 residues coordinate dimethylallyl diphosphate: H47 and H80. Positions 47 and 80 each coordinate isopentenyl diphosphate. C102 contributes to the [4Fe-4S] cluster binding site. H130 is a binding site for (2E)-4-hydroxy-3-methylbut-2-enyl diphosphate. H130 lines the dimethylallyl diphosphate pocket. H130 lines the isopentenyl diphosphate pocket. E132 serves as the catalytic Proton donor. T171 provides a ligand contact to (2E)-4-hydroxy-3-methylbut-2-enyl diphosphate. C201 serves as a coordination point for [4Fe-4S] cluster. Residues S229, S230, N231, and S274 each contribute to the (2E)-4-hydroxy-3-methylbut-2-enyl diphosphate site. The dimethylallyl diphosphate site is built by S229, S230, N231, and S274. Residues S229, S230, N231, and S274 each coordinate isopentenyl diphosphate.

It belongs to the IspH family. The cofactor is [4Fe-4S] cluster.

The enzyme catalyses isopentenyl diphosphate + 2 oxidized [2Fe-2S]-[ferredoxin] + H2O = (2E)-4-hydroxy-3-methylbut-2-enyl diphosphate + 2 reduced [2Fe-2S]-[ferredoxin] + 2 H(+). The catalysed reaction is dimethylallyl diphosphate + 2 oxidized [2Fe-2S]-[ferredoxin] + H2O = (2E)-4-hydroxy-3-methylbut-2-enyl diphosphate + 2 reduced [2Fe-2S]-[ferredoxin] + 2 H(+). It participates in isoprenoid biosynthesis; dimethylallyl diphosphate biosynthesis; dimethylallyl diphosphate from (2E)-4-hydroxy-3-methylbutenyl diphosphate: step 1/1. The protein operates within isoprenoid biosynthesis; isopentenyl diphosphate biosynthesis via DXP pathway; isopentenyl diphosphate from 1-deoxy-D-xylulose 5-phosphate: step 6/6. In terms of biological role, catalyzes the conversion of 1-hydroxy-2-methyl-2-(E)-butenyl 4-diphosphate (HMBPP) into a mixture of isopentenyl diphosphate (IPP) and dimethylallyl diphosphate (DMAPP). Acts in the terminal step of the DOXP/MEP pathway for isoprenoid precursor biosynthesis. The polypeptide is 4-hydroxy-3-methylbut-2-enyl diphosphate reductase (Ruegeria sp. (strain TM1040) (Silicibacter sp.)).